The sequence spans 152 residues: Protein SprT-like (152 aa).

Residues 9–149 (LQKLTETISL…CGKCNGKLKE (141 aa)) form the SprT-like domain. His-70 is a Zn(2+) binding site. The active site involves Glu-71. His-74 provides a ligand contact to Zn(2+).

This sequence belongs to the SprT family. Zn(2+) is required as a cofactor.

It localises to the cytoplasm. This Staphylococcus saprophyticus subsp. saprophyticus (strain ATCC 15305 / DSM 20229 / NCIMB 8711 / NCTC 7292 / S-41) protein is Protein SprT-like.